Consider the following 307-residue polypeptide: MFWFDAVLLGVLEGLTEFLPVSSTGHLILLGAWLGHQSEAAKTLDIVIQLGAVLAVVVYFRERLSTTVRGMVRRDPDSLRLALALAFAFLPAAVVGLLFHKAIKAHLFGPGPVAAALIVGGFLMIGVESLRRRRPDQGAPRVEDVTFQRALAIGFAQCFSLWPGASRSMTTIVGGQLSGLSTAAAAEFSFLLAIPTLGAATVFDLVKNGRALLDAPGGIVALVVGLAVSFAVALLVIAVFLRYLKRYGLAPFGWYRIALGALVLWLWIASRSAPAEAGAASASPAPRGDVAAAVDGLARTGDHPSRP.

Transmembrane regions (helical) follow at residues 40–60, 79–99, 107–127, 183–203, 219–239, and 249–269; these read AAKTLDIVIQLGAVLAVVVYF, LRLALALAFAFLPAAVVGLLF, LFGPGPVAAALIVGGFLMIGV, AAAAEFSFLLAIPTLGAATVF, IVALVVGLAVSFAVALLVIAV, and LAPFGWYRIALGALVLWLWIA.

Belongs to the UppP family.

It is found in the cell inner membrane. It catalyses the reaction di-trans,octa-cis-undecaprenyl diphosphate + H2O = di-trans,octa-cis-undecaprenyl phosphate + phosphate + H(+). Functionally, catalyzes the dephosphorylation of undecaprenyl diphosphate (UPP). Confers resistance to bacitracin. In Sorangium cellulosum (strain So ce56) (Polyangium cellulosum (strain So ce56)), this protein is Undecaprenyl-diphosphatase.